The sequence spans 191 residues: A-type ATP synthase subunit E (191 aa).

Belongs to the V-ATPase E subunit family. In terms of assembly, has multiple subunits with at least A(3), B(3), C, D, E, F, H, I and proteolipid K(x).

The protein resides in the cell membrane. Functionally, component of the A-type ATP synthase that produces ATP from ADP in the presence of a proton gradient across the membrane. The chain is A-type ATP synthase subunit E from Methanoregula boonei (strain DSM 21154 / JCM 14090 / 6A8).